Consider the following 137-residue polypeptide: Large ribosomal subunit protein uL16 (137 aa).

The protein belongs to the universal ribosomal protein uL16 family. In terms of assembly, part of the 50S ribosomal subunit.

Its function is as follows. Binds 23S rRNA and is also seen to make contacts with the A and possibly P site tRNAs. In Methylococcus capsulatus (strain ATCC 33009 / NCIMB 11132 / Bath), this protein is Large ribosomal subunit protein uL16.